A 460-amino-acid chain; its full sequence is Glycine--tRNA ligase (460 aa).

2 residues coordinate substrate: Arg98 and Glu172. ATP is bound by residues 204 to 206 (RNE), 214 to 219 (FRTREF), 288 to 289 (EL), and 332 to 335 (GADR). A substrate-binding site is contributed by 219-223 (FEQME). 328–332 (EPSLG) contributes to the substrate binding site.

It belongs to the class-II aminoacyl-tRNA synthetase family. Homodimer.

The protein localises to the cytoplasm. The catalysed reaction is tRNA(Gly) + glycine + ATP = glycyl-tRNA(Gly) + AMP + diphosphate. In terms of biological role, catalyzes the attachment of glycine to tRNA(Gly). The chain is Glycine--tRNA ligase from Geobacillus kaustophilus (strain HTA426).